The following is a 363-amino-acid chain: Endopolygalacturonase A (363 aa).

Positions 1–20 (MQLLQSSVIAATVGAALVAA) are cleaved as a signal peptide. Residues 21–28 (VPVELEAR) constitute a propeptide that is removed on maturation. Cysteines 31 and 46 form a disulfide. 6 PbH1 repeats span residues 158-187 (SDNL…DVGS), 188-209 (STYI…AINS), 210-230 (GSHI…SIGS), 239-260 (VEDV…RIKT), 268-290 (VSNV…IVEQ), and 302-347 (TNGI…SITG). A glycan (N-linked (GlcNAc...) asparagine) is linked at asparagine 162. The active-site Proton donor is aspartate 202. Cysteine 204 and cysteine 220 are oxidised to a cystine. The active site involves histidine 224. 2 disulfide bridges follow: cysteine 330/cysteine 335 and cysteine 354/cysteine 363.

This sequence belongs to the glycosyl hydrolase 28 family.

It is found in the secreted. It carries out the reaction (1,4-alpha-D-galacturonosyl)n+m + H2O = (1,4-alpha-D-galacturonosyl)n + (1,4-alpha-D-galacturonosyl)m.. Functionally, involved in maceration and soft-rotting of plant tissue. Hydrolyzes the 1,4-alpha glycosidic bonds of de-esterified pectate in the smooth region of the plant cell wall. The protein is Endopolygalacturonase A (pgaA) of Aspergillus flavus (strain ATCC MYA-384 / AF70).